Reading from the N-terminus, the 103-residue chain is Protein reprimo A (103 aa).

A helical transmembrane segment spans residues 50 to 70 (IVQIAVMCVLSLTVVFGIFFL).

This sequence belongs to the reprimo family.

The protein resides in the cytoplasm. Its subcellular location is the membrane. Its function is as follows. May be involved in the regulation of p53-dependent G2 arrest of the cell cycle. This is Protein reprimo A from Danio rerio (Zebrafish).